Here is a 114-residue protein sequence, read N- to C-terminus: Large ribosomal subunit protein uL22 (114 aa).

It belongs to the universal ribosomal protein uL22 family. In terms of assembly, part of the 50S ribosomal subunit.

Its function is as follows. This protein binds specifically to 23S rRNA; its binding is stimulated by other ribosomal proteins, e.g. L4, L17, and L20. It is important during the early stages of 50S assembly. It makes multiple contacts with different domains of the 23S rRNA in the assembled 50S subunit and ribosome. In terms of biological role, the globular domain of the protein is located near the polypeptide exit tunnel on the outside of the subunit, while an extended beta-hairpin is found that lines the wall of the exit tunnel in the center of the 70S ribosome. This Streptococcus mutans serotype c (strain ATCC 700610 / UA159) protein is Large ribosomal subunit protein uL22.